The primary structure comprises 430 residues: Dihydrolipoyllysine-residue acetyltransferase component of pyruvate dehydrogenase complex (430 aa).

The region spanning 2 to 77 (AFEFRLPDIG…VVGDVIVKID (76 aa)) is the Lipoyl-binding domain. Lysine 43 is subject to N6-lipoyllysine. A disordered region spans residues 80-122 (DAEDMQFKGHDDDSSSKEEPAKEEAPAEQAPVATQTEEVDENR). The segment covering 84 to 104 (MQFKGHDDDSSSKEEPAKEEA) has biased composition (basic and acidic residues). Residues 125–162 (KAMPSVRKYAREKGVNIKAVSGSGKNGRITKEDVDAYL) enclose the Peripheral subunit-binding (PSBD) domain. The disordered stretch occupies residues 164–199 (GGAPTASNESAASATSEEVAETPAAPAAVSLEGDFP). The span at 166–193 (APTASNESAASATSEEVAETPAAPAAVS) shows a compositional bias: low complexity. Residue histidine 401 is part of the active site.

It belongs to the 2-oxoacid dehydrogenase family. As to quaternary structure, forms a 24-polypeptide structural core with octahedral symmetry. The cofactor is (R)-lipoate.

The enzyme catalyses N(6)-[(R)-dihydrolipoyl]-L-lysyl-[protein] + acetyl-CoA = N(6)-[(R)-S(8)-acetyldihydrolipoyl]-L-lysyl-[protein] + CoA. Functionally, the pyruvate dehydrogenase complex catalyzes the overall conversion of pyruvate to acetyl-CoA and CO(2). It contains multiple copies of three enzymatic components: pyruvate dehydrogenase (E1), dihydrolipoamide acetyltransferase (E2) and lipoamide dehydrogenase (E3). The polypeptide is Dihydrolipoyllysine-residue acetyltransferase component of pyruvate dehydrogenase complex (pdhC) (Staphylococcus aureus (strain Mu50 / ATCC 700699)).